The following is a 250-amino-acid chain: Peptidyl-tRNA hydrolase (250 aa).

A tRNA-binding site is contributed by tyrosine 14. The active-site Proton acceptor is the histidine 19. 3 residues coordinate tRNA: phenylalanine 64, asparagine 66, and asparagine 112. The disordered stretch occupies residues 192-250 (MGDGNQRPGGVKTDPAQLEKAPPKAQSHIRQARQNQKKPNIPESGPMAEMLKKLLGKKD). Positions 219-229 (HIRQARQNQKK) are enriched in polar residues. Residues 241 to 250 (MLKKLLGKKD) are compositionally biased toward basic and acidic residues.

This sequence belongs to the PTH family. In terms of assembly, monomer.

The protein resides in the cytoplasm. The enzyme catalyses an N-acyl-L-alpha-aminoacyl-tRNA + H2O = an N-acyl-L-amino acid + a tRNA + H(+). Hydrolyzes ribosome-free peptidyl-tRNAs (with 1 or more amino acids incorporated), which drop off the ribosome during protein synthesis, or as a result of ribosome stalling. Its function is as follows. Catalyzes the release of premature peptidyl moieties from peptidyl-tRNA molecules trapped in stalled 50S ribosomal subunits, and thus maintains levels of free tRNAs and 50S ribosomes. This Brucella suis (strain ATCC 23445 / NCTC 10510) protein is Peptidyl-tRNA hydrolase.